We begin with the raw amino-acid sequence, 208 residues long: Dual specificity protein phosphatase 22-A (208 aa).

In terms of domain architecture, Tyrosine-protein phosphatase spans 4–144 (GMNKVIDGLY…LQEFQMKQVS (141 aa)). The active-site Phosphocysteine intermediate is the Cys-88.

This sequence belongs to the protein-tyrosine phosphatase family. Non-receptor class dual specificity subfamily.

Its subcellular location is the cytoplasm. It localises to the nucleus. The enzyme catalyses O-phospho-L-tyrosyl-[protein] + H2O = L-tyrosyl-[protein] + phosphate. It catalyses the reaction O-phospho-L-seryl-[protein] + H2O = L-seryl-[protein] + phosphate. The catalysed reaction is O-phospho-L-threonyl-[protein] + H2O = L-threonyl-[protein] + phosphate. Its function is as follows. Activates the Jnk signaling pathway. Dephosphorylates and deactivates p38 and stress-activated protein kinase/c-Jun N-terminal kinase (SAPK/JNK). The chain is Dual specificity protein phosphatase 22-A from Danio rerio (Zebrafish).